The following is a 996-amino-acid chain: Phototropin-1 (996 aa).

Residues 1–184 are disordered; the sequence is MEPTEKPSTK…PGGRSGIPRV (184 aa). Phosphoserine occurs at positions 23 and 58. The segment covering 49 to 59 has biased composition (polar residues); it reads QNLSDPRGTSP. A compositionally biased stretch (pro residues) spans 60-70; it reads QPRPQQEPAPS. Residues 141–153 are compositionally biased toward polar residues; the sequence is SGGTENDPNGKKT. Residues 155 to 166 are compositionally biased toward low complexity; the sequence is SQRNSQNSCRSS. The region spanning 184-257 is the PAS 1 domain; it reads VSEDLKDALS…AKIRETLAAG (74 aa). Position 185 is a phosphoserine (serine 185). Asparagine 233 lines the FMN pocket. Position 234 is an S-4a-FMN cysteine (cysteine 234). FMN is bound by residues arginine 235, glutamine 238, arginine 251, asparagine 266, asparagine 276, glutamine 297, and lysine 302. The PAC 1 domain occupies 258–312; sequence NNYCGRILNYKKDGTSFWNLLTIAPIKDESGKVLKFIGMQVEVSKHTEGAKEKAL. Serine 350, serine 376, and serine 410 each carry phosphoserine. 2 disordered regions span residues 351 to 413 and 434 to 453; these read ESTN…SLSF and YGEEDDEISDRDERPESVDD. Residues 434–443 are compositionally biased toward acidic residues; sequence YGEEDDEISD. Basic and acidic residues predominate over residues 444–453; the sequence is RDERPESVDD. Phosphoserine is present on serine 450. Residues 462–535 form the PAS 2 domain; sequence KGIDLATTLE…KKIRNAIDNQ (74 aa). An FMN-binding site is contributed by asparagine 511. At cysteine 512 the chain carries S-4a-FMN cysteine. FMN-binding residues include arginine 513, glutamine 516, arginine 529, asparagine 544, asparagine 554, phenylalanine 556, and glutamine 575. Positions 536-590 constitute a PAC 2 domain; the sequence is TEVTVQLINYTKSGKKFWNIFHLQPMRDQKGEVQYFIGVQLDGSKHVEPVRNVIE. Positions 663-952 constitute a Protein kinase domain; that stretch reads FKPVKPLGSG…ANEVKQHSFF (290 aa). ATP is bound by residues 669–677 and lysine 692; that span reads LGSGDTGSV. The active-site Proton acceptor is aspartate 788. An activation loop region spans residues 806–862; that stretch reads DFDLSCLTSCKPQLLIPSIDEKKKKKQQKSQQTPIFMAEPMRASNSFVGTEEYIAPE.

This sequence belongs to the protein kinase superfamily. AGC Ser/Thr protein kinase family. In terms of assembly, homodimer; disulfide-linked. Interacts with PKS1, PKS2, RPT2, RPT3, PHOT2 and BLUS1. Subunit of a complex made of CAR6, PHOT1 and RPT3/NPH3. Associates with CBC1 and CBC2. Binds to BHP. It depends on FMN as a cofactor. Autophosphorylated at Ser-185, Ser-350 and Ser-410 in response to blue light irradiation. In terms of processing, 2 molecules of FMN bind covalently to cysteines after exposure to blue light and are reversed in the dark. Present in guard cells (at protein level).

It localises to the cell membrane. It is found in the cytoplasm. The catalysed reaction is L-seryl-[protein] + ATP = O-phospho-L-seryl-[protein] + ADP + H(+). It carries out the reaction L-threonyl-[protein] + ATP = O-phospho-L-threonyl-[protein] + ADP + H(+). Its activity is regulated as follows. Autophosphorylation is inhibited by staurosporine, but not by tyrphostin 9, sphingosine, GW5074 and BML-265. Its function is as follows. Protein kinase that acts as a blue light (BL) photoreceptor in a signal-transduction pathway for photo-induced movements. Triggers the phosphorylation of AHA1 and AHA2 C-terminal penultimate Thr in guard cells to activate them and induce stomatal opening in response to blue light (BL). Also phosphorylates BLUS1, a kinase involved in stomatal opening. Mediates the phosphorylation of CBC1 in stomata, but not of CBC2, in response to blue light. Required for blue light mediated mRNA destabilization. Mediates calcium spiking of extracellular origin in response to a low rate of blue light. Also mediates rapid membrane depolarization and growth inhibition in response to blue light. Necessary for root phototropism. Involved in hypocotyl phototropism under a low rate but not under a high rate of blue light. Contributes to the chloroplast accumulation but seems not to be required for chloroplast translocation. Regulates stomata opening and photomorphogenesis response of leaf tissue. Confers sensitivity to drought. Not involved in hypocotyl elongation inhibition, anthocyanin accumulation or cotyledon opening. Involved in the regulation of leaf position and morphology via the phosphorylation of ABCB19 during blue light responses to modulate auxin distribution. The sequence is that of Phototropin-1 from Arabidopsis thaliana (Mouse-ear cress).